A 121-amino-acid polypeptide reads, in one-letter code: Large ribosomal subunit protein uL18 (121 aa).

The protein belongs to the universal ribosomal protein uL18 family. As to quaternary structure, part of the 50S ribosomal subunit; part of the 5S rRNA/L5/L18/L25 subcomplex. Contacts the 5S and 23S rRNAs.

Its function is as follows. This is one of the proteins that bind and probably mediate the attachment of the 5S RNA into the large ribosomal subunit, where it forms part of the central protuberance. This Burkholderia multivorans (strain ATCC 17616 / 249) protein is Large ribosomal subunit protein uL18.